The sequence spans 271 residues: Mannosyl-3-phosphoglycerate phosphatase (271 aa).

Residue Asp-13 is the Nucleophile of the active site. Mg(2+) is bound by residues Asp-13, Asp-15, and Asp-214.

Belongs to the HAD-like hydrolase superfamily. MPGP family. Mg(2+) serves as cofactor.

Its subcellular location is the cytoplasm. The catalysed reaction is 2-O-(alpha-D-mannosyl)-3-phosphoglycerate + H2O = (2R)-2-O-(alpha-D-mannosyl)-glycerate + phosphate. The chain is Mannosyl-3-phosphoglycerate phosphatase from Escherichia coli O17:K52:H18 (strain UMN026 / ExPEC).